The chain runs to 245 residues: Orotidine 5'-phosphate decarboxylase (245 aa).

Substrate-binding positions include aspartate 22, lysine 44, 71-80, threonine 131, arginine 192, glutamine 201, glycine 221, and arginine 222; that span reads DLKFHDIPNT. Residue lysine 73 is the Proton donor of the active site.

Belongs to the OMP decarboxylase family. Type 1 subfamily. Homodimer.

The catalysed reaction is orotidine 5'-phosphate + H(+) = UMP + CO2. It participates in pyrimidine metabolism; UMP biosynthesis via de novo pathway; UMP from orotate: step 2/2. Its function is as follows. Catalyzes the decarboxylation of orotidine 5'-monophosphate (OMP) to uridine 5'-monophosphate (UMP). This chain is Orotidine 5'-phosphate decarboxylase, found in Escherichia coli O157:H7.